A 627-amino-acid chain; its full sequence is Muscarinic acetylcholine receptor gar-2 (627 aa).

Residues 1-9 lie on the Extracellular side of the membrane; sequence MAVASVLLA. Residues 10 to 30 traverse the membrane as a helical segment; it reads LFMLFLSIVTVIGNLAVLLSY. The Cytoplasmic portion of the chain corresponds to 31-41; sequence YLDKNIRQPTN. Residues 42–62 traverse the membrane as a helical segment; that stretch reads YFIFSLAISDLLIGLEGIPVY. Residues 63–81 are Extracellular-facing; sequence TAFYLNNNEWIWGDVLCDL. Residues Cys79 and Cys160 are joined by a disulfide bond. A helical membrane pass occupies residues 82–102; the sequence is WLSIDYIVCLASIYTVLGITV. Topologically, residues 103-122 are cytoplasmic; that stretch reads DRYYSVKKPATYRNWRTPGR. Residues 123 to 143 form a helical membrane-spanning segment; the sequence is VVLIIIFIWLVPSILFSVSIF. Topologically, residues 144–172 are extracellular; that stretch reads GYGTFTGTGRILKETECYVQFMTNPYLNM. Residues 173–193 traverse the membrane as a helical segment; that stretch reads GMYISYYWTTLFVMLYLYWGI. Residues 194–549 lie on the Cytoplasmic side of the membrane; sequence YRAAKKLALK…ENRARKALRT (356 aa). 3 disordered regions span residues 222-266, 423-442, and 449-475; these read VSVR…VGTP, REDE…ENGG, and ANDE…HDPN. The segment covering 231–264 has biased composition (low complexity); the sequence is NSSSDSPNDTSNSSKCFRTAPPTTTVQTTQTNVG. Residues 459–475 are compositionally biased toward basic and acidic residues; sequence KESEQKEEMTPENHDPN. Residues 550–570 form a helical membrane-spanning segment; sequence ITFILGSFIILWTPFYVLATI. Over 571 to 586 the chain is Extracellular; sequence YGFCETCKASPSFNTL. A helical transmembrane segment spans residues 587-609; it reads YTISYYLCYMNSPLNPFCYAMAN. The Cytoplasmic segment spans residues 610–627; that stretch reads QQFKKTLTRIFKGDFRRV.

This sequence belongs to the G-protein coupled receptor 1 family. Muscarinic acetylcholine receptor subfamily. As to expression, expressed in putative sensory neurons, many cells of the ventral cord and in the HSN motor neurons. Expressed in some cholinergic motor neurons and GABAergic motor neurons, which are the two major types of ventral cord motor neurons.

The protein localises to the cell membrane. Its subcellular location is the cell projection. It is found in the axon. Its function is as follows. The muscarinic acetylcholine receptor mediates various cellular responses, including inhibition of adenylate cyclase, breakdown of phosphoinositides and modulation of potassium channels through the action of G proteins. Primary transducing effect is Pi turnover. Regulates the activity of ventral cord motor neurons. Couples to the G(o)-alpha G-protein subunit goa-1 to negatively regulate cholinergic receptor activity in the presence of high levels of the neurotransmitter acetylcholine in ventral cord motor neurons. As acetylcholine depolarizes body wall muscles, modulation of acetylcholine levels most likely results in the control locomotory behavior and egg-laying. The protein is Muscarinic acetylcholine receptor gar-2 of Caenorhabditis elegans.